Consider the following 389-residue polypeptide: Lipid-A-disaccharide synthase (389 aa).

Belongs to the LpxB family.

It carries out the reaction a lipid X + a UDP-2-N,3-O-bis[(3R)-3-hydroxyacyl]-alpha-D-glucosamine = a lipid A disaccharide + UDP + H(+). Its pathway is bacterial outer membrane biogenesis; LPS lipid A biosynthesis. In terms of biological role, condensation of UDP-2,3-diacylglucosamine and 2,3-diacylglucosamine-1-phosphate to form lipid A disaccharide, a precursor of lipid A, a phosphorylated glycolipid that anchors the lipopolysaccharide to the outer membrane of the cell. This chain is Lipid-A-disaccharide synthase, found in Burkholderia cenocepacia (strain HI2424).